Here is a 259-residue protein sequence, read N- to C-terminus: Deoxyribose-phosphate aldolase (259 aa).

The active-site Proton donor/acceptor is the D102. Residue K167 is the Schiff-base intermediate with acetaldehyde of the active site. Catalysis depends on K201, which acts as the Proton donor/acceptor.

It belongs to the DeoC/FbaB aldolase family. DeoC type 2 subfamily.

The protein localises to the cytoplasm. The catalysed reaction is 2-deoxy-D-ribose 5-phosphate = D-glyceraldehyde 3-phosphate + acetaldehyde. The protein operates within carbohydrate degradation; 2-deoxy-D-ribose 1-phosphate degradation; D-glyceraldehyde 3-phosphate and acetaldehyde from 2-deoxy-alpha-D-ribose 1-phosphate: step 2/2. In terms of biological role, catalyzes a reversible aldol reaction between acetaldehyde and D-glyceraldehyde 3-phosphate to generate 2-deoxy-D-ribose 5-phosphate. In Erwinia tasmaniensis (strain DSM 17950 / CFBP 7177 / CIP 109463 / NCPPB 4357 / Et1/99), this protein is Deoxyribose-phosphate aldolase.